We begin with the raw amino-acid sequence, 335 residues long: Tetraacyldisaccharide 4'-kinase (335 aa).

ATP is bound at residue 58–65; the sequence is TVGGSGKT.

It belongs to the LpxK family.

The catalysed reaction is a lipid A disaccharide + ATP = a lipid IVA + ADP + H(+). The protein operates within glycolipid biosynthesis; lipid IV(A) biosynthesis; lipid IV(A) from (3R)-3-hydroxytetradecanoyl-[acyl-carrier-protein] and UDP-N-acetyl-alpha-D-glucosamine: step 6/6. Its function is as follows. Transfers the gamma-phosphate of ATP to the 4'-position of a tetraacyldisaccharide 1-phosphate intermediate (termed DS-1-P) to form tetraacyldisaccharide 1,4'-bis-phosphate (lipid IVA). The polypeptide is Tetraacyldisaccharide 4'-kinase (Shewanella sp. (strain MR-7)).